A 329-amino-acid polypeptide reads, in one-letter code: Malate dehydrogenase (329 aa).

12-18 (GAAGQIG) provides a ligand contact to NAD(+). Substrate-binding residues include arginine 95 and arginine 101. NAD(+)-binding positions include asparagine 108, glutamine 115, and 132 to 134 (VGN). Substrate-binding residues include asparagine 134 and arginine 165. Histidine 190 (proton acceptor) is an active-site residue.

This sequence belongs to the LDH/MDH superfamily. MDH type 2 family.

The catalysed reaction is (S)-malate + NAD(+) = oxaloacetate + NADH + H(+). Functionally, catalyzes the reversible oxidation of malate to oxaloacetate. The chain is Malate dehydrogenase from Polynucleobacter asymbioticus (strain DSM 18221 / CIP 109841 / QLW-P1DMWA-1) (Polynucleobacter necessarius subsp. asymbioticus).